The chain runs to 754 residues: Circadian input-output histidine kinase CikA (754 aa).

The interval 1–183 (MLAPSSNCSL…QVSAQIRLSL (183 aa)) is N-terminal domain, not required to complement the deletion strain. The segment at 184 to 338 (DLSEILTTTI…RDILQHLAEH (155 aa)) is GAF domain, required to complement the deletion strain. Positions 390–611 (TMSHELRTPL…TFTVWIPEQT (222 aa)) constitute a Histidine kinase domain. At His393 the chain carries Phosphohistidine; by autocatalysis. Positions 606-754 (WIPEQTLIEP…NLSEGDRPSS (149 aa)) are psR domain, required to complement the deletion strain and for cell pole localization, attenuates autophosphorylation activity. Binds KaiB(fs). One can recognise a Response regulatory domain in the interval 629–742 (HILLLEEEDE…LLLTTLQGLC (114 aa)).

In the N-terminal section; belongs to the phytochrome family. Homodimer. Part of the circadian clock (KaiA, KaiB, KaiC, CikA, RpaA, SasA), the composition of which varies during the circadian cycle. Interacts with LdpA. KaiA and CikA compete for binding to KaiB(fs).

It is found in the cytoplasm. Its subcellular location is the membrane. It catalyses the reaction ATP + protein L-histidine = ADP + protein N-phospho-L-histidine.. Functionally, functions in an input pathway to the Kai circadian clock. Senses oxidized quinones via its C-terminal pseudo-receiver domain, providing a link between cell metabolism and the clock. Affects the ratio of phosphorylated to unphosphorylated KaiC, binds quinones via its pseudo-receptor domain. Quinone-binding destabilizes the protein rapidly. Autophosphorylates, does not transfer the phosphate to its pseudo-receiver (PsR) domain. May play a role in cell division, as suggested by its polar location and increased cell length in a deletion strain. Its function is as follows. Member of the two-component regulatory system CikA/RpaA output pathway from the circadian clock, negatively regulating kaiBC expression independently of labA and of sasA. One of three clock output pathways. Dephosphorylates phospho-RpaA, enhanced by KaiB and KaiC, has only modest kinase activity on RpaA. A very robust clock is reconstituted with KaiA, KaiB, KaiC, SasA, CikA and RpaA; output is measured by transcription from an appropriate reporter. This is Circadian input-output histidine kinase CikA from Synechococcus elongatus (strain ATCC 33912 / PCC 7942 / FACHB-805) (Anacystis nidulans R2).